Consider the following 298-residue polypeptide: Probable alpha-L-glutamate ligase 2 (298 aa).

Residues 104-287 form the ATP-grasp domain; sequence MQLLSRQGIG…VADAIICFME (184 aa). Residues Lys141, 178 to 179, Asp187, and 211 to 213 contribute to the ATP site; these read EY and RSN. Residues Asp248, Glu260, and Asn262 each coordinate Mg(2+). Residues Asp248, Glu260, and Asn262 each contribute to the Mn(2+) site.

This sequence belongs to the RimK family. Mg(2+) serves as cofactor. Mn(2+) is required as a cofactor.

In Shewanella frigidimarina (strain NCIMB 400), this protein is Probable alpha-L-glutamate ligase 2.